The chain runs to 347 residues: Haptoglobin (347 aa).

An N-terminal signal peptide occupies residues 1 to 18; sequence MSDLGAVVALLLWGQLFA. Residues 31–88 enclose the Sushi domain; the sequence is DGCPKPPMIANGYVEHLVRYQCKNYYRLRTEGDGVYTLNNEKQWTNKAVGDKLPECEA. Cystine bridges form between Cys52–Cys86 and Cys90–Cys207. Residues 103–347 form a serine protease region; the sequence is ILGGHLDAKG…DWVQKTIAEN (245 aa). N-linked (GlcNAc...) asparagine glycosylation is found at Asn125, Asn148, Asn152, Asn182, and Asn232. 2 disulfide bridges follow: Cys250/Cys281 and Cys292/Cys322. Residues 259 to 264 are interaction with CD163; sequence VPEKKT.

It belongs to the peptidase S1 family. In terms of assembly, tetramer of two alpha and two beta chains; disulfide-linked. The hemoglobin/haptoglobin complex is composed of a haptoglobin dimer bound to two hemoglobin alpha-beta dimers. Interacts with CD163. Interacts with ERGIC3. As to expression, expressed by the liver and secreted in plasma.

The protein localises to the secreted. Functionally, as a result of hemolysis, hemoglobin is found to accumulate in the kidney and is secreted in the urine. Haptoglobin captures, and combines with free plasma hemoglobin to allow hepatic recycling of heme iron and to prevent kidney damage. Haptoglobin also acts as an antioxidant, has antibacterial activity and plays a role in modulating many aspects of the acute phase response. Hemoglobin/haptoglobin complexes are rapidly cleared by the macrophage CD163 scavenger receptor expressed on the surface of liver Kupfer cells through an endocytic lysosomal degradation pathway. In Papio hamadryas (Hamadryas baboon), this protein is Haptoglobin (HP).